Reading from the N-terminus, the 142-residue chain is HTH-type transcriptional repressor NsrR (142 aa).

Residues 2–129 enclose the HTH rrf2-type domain; it reads QLTSFTDYGL…DRHTLAELVE (128 aa). Positions 28–51 form a DNA-binding region, H-T-H motif; it reads ITEVTQVYGVSRNHMVKIINQLSH. [2Fe-2S] cluster is bound by residues Cys91, Cys96, and Cys102.

Requires [2Fe-2S] cluster as cofactor.

Its function is as follows. Nitric oxide-sensitive repressor of genes involved in protecting the cell against nitrosative stress. May require iron for activity. This chain is HTH-type transcriptional repressor NsrR, found in Proteus mirabilis (strain HI4320).